A 380-amino-acid polypeptide reads, in one-letter code: Anhydro-N-acetylmuramic acid kinase (380 aa).

ATP is bound at residue Gly9–Asp16.

Belongs to the anhydro-N-acetylmuramic acid kinase family.

The enzyme catalyses 1,6-anhydro-N-acetyl-beta-muramate + ATP + H2O = N-acetyl-D-muramate 6-phosphate + ADP + H(+). The protein operates within amino-sugar metabolism; 1,6-anhydro-N-acetylmuramate degradation. It participates in cell wall biogenesis; peptidoglycan recycling. Its function is as follows. Catalyzes the specific phosphorylation of 1,6-anhydro-N-acetylmuramic acid (anhMurNAc) with the simultaneous cleavage of the 1,6-anhydro ring, generating MurNAc-6-P. Is required for the utilization of anhMurNAc either imported from the medium or derived from its own cell wall murein, and thus plays a role in cell wall recycling. This Synechococcus sp. (strain CC9902) protein is Anhydro-N-acetylmuramic acid kinase.